A 185-amino-acid chain; its full sequence is Ribosome-recycling factor (185 aa).

This sequence belongs to the RRF family.

The protein localises to the cytoplasm. Its function is as follows. Responsible for the release of ribosomes from messenger RNA at the termination of protein biosynthesis. May increase the efficiency of translation by recycling ribosomes from one round of translation to another. The chain is Ribosome-recycling factor from Campylobacter jejuni subsp. doylei (strain ATCC BAA-1458 / RM4099 / 269.97).